A 202-amino-acid chain; its full sequence is MADVMPSRTGQVSRKTNETAISVSVNVDGTGVSKIATGVGFFDHMLDQLSRHSLIDMEIKAEGDLHVDDHHTVEDTGIAIGQALAKALGDRRGITRYASIDLAMDETMTRAAVDVSGRPFLVWNVTFTSPKIGTFDTELVREFFQALAQHAGITLHVQNIYGANNHHVAETCFKSVARVLRTATEIDPRQAGRVPSTKGTLA.

It belongs to the imidazoleglycerol-phosphate dehydratase family.

The protein localises to the cytoplasm. The catalysed reaction is D-erythro-1-(imidazol-4-yl)glycerol 3-phosphate = 3-(imidazol-4-yl)-2-oxopropyl phosphate + H2O. Its pathway is amino-acid biosynthesis; L-histidine biosynthesis; L-histidine from 5-phospho-alpha-D-ribose 1-diphosphate: step 6/9. In Rhizobium meliloti (strain 1021) (Ensifer meliloti), this protein is Imidazoleglycerol-phosphate dehydratase.